We begin with the raw amino-acid sequence, 483 residues long: Regulatory protein ViaA (483 aa).

Belongs to the ViaA family. In terms of assembly, homodimer. Interacts with RavA.

The protein localises to the cytoplasm. In terms of biological role, component of the RavA-ViaA chaperone complex, which may act on the membrane to optimize the function of some of the respiratory chains. ViaA stimulates the ATPase activity of RavA. The protein is Regulatory protein ViaA of Shigella flexneri serotype 5b (strain 8401).